The following is a 441-amino-acid chain: Leucine-rich repeat-containing protein 17 (441 aa).

The signal sequence occupies residues 1–18 (MRVVTIVILLCFCKAAEL). LRR repeat units follow at residues 82–103 (DLLH…MFSK), 106–127 (KLKS…AFFG), and 130–151 (KLTT…VFIY). In terms of domain architecture, LRRCT 1 spans 163 to 214 (NPWHCTCEIETLISMLQIPRNRNLGNYAKCESPQEQKNKKLRQIKSEQLCNE). An LRRNT domain is found at 225 to 268 (QVSGRPPVIKPEVDSTFCHNYVFPIQTLDCKRKELKKVPNNIPP). LRR repeat units follow at residues 269–290 (DIVK…EFED), 293–314 (ELKK…AFLG), and 317–340 (HLEE…EDLY). One can recognise an LRRCT 2 domain in the interval 350-402 (NPWRCDYNIHYLYYWLKHHYNVHFNGLECKTPEEYKGWSVGKYIRSYYEECPK).

Expressed in osteoblast cell lines. Well expressed in ovary, heart, pancreas, skeletal muscle, lung, and fetal kidney and lung and only at the basal levels in the other tissues examined including adult kidney. More expressed in S-type neuroblastoma cells than in N-type neuroblastoma cells.

It localises to the secreted. The protein localises to the extracellular space. In terms of biological role, involved in bone homeostasis. Acts as a negative regulator of RANKL-induced osteoclast precursor differentiation from bone marrow precursors. This is Leucine-rich repeat-containing protein 17 (LRRC17) from Homo sapiens (Human).